We begin with the raw amino-acid sequence, 329 residues long: Cathepsin K (329 aa).

The first 15 residues, M1–A15, serve as a signal peptide directing secretion. A propeptide spans L16–R114 (activation peptide). N103 is a glycosylation site (N-linked (GlcNAc...) asparagine). 2 cysteine pairs are disulfide-bonded: C136/C177 and C170/C210. C139 is an active-site residue. Residue N213 is glycosylated (N-linked (GlcNAc...) asparagine). C269 and C318 are joined by a disulfide. Residues H276 and N296 contribute to the active site.

The protein belongs to the peptidase C1 family. In terms of tissue distribution, predominantly expressed in bones. Expressed in thyroid epithelial cells.

The protein localises to the lysosome. Its subcellular location is the secreted. The protein resides in the apical cell membrane. The catalysed reaction is Broad proteolytic activity. With small-molecule substrates and inhibitors, the major determinant of specificity is P2, which is preferably Leu, Met &gt; Phe, and not Arg.. Thiol protease involved in osteoclastic bone resorption. Displays potent endoprotease activity against fibrinogen at acid pH. May play an important role in extracellular matrix degradation. Involved in the release of thyroid hormone thyroxine (T4) by limited proteolysis of TG/thyroglobulin in the thyroid follicle lumen. The polypeptide is Cathepsin K (Ctsk) (Mus musculus (Mouse)).